Consider the following 315-residue polypeptide: Mitochondrial outer membrane import complex protein METAXIN (315 aa).

N-acetylmethionine is present on methionine 1. A coiled-coil region spans residues glutamate 157–leucine 181. A helical transmembrane segment spans residues leucine 195–valine 215. The tract at residues alanine 240–lysine 277 is disordered. A compositionally biased stretch (basic and acidic residues) spans proline 267–lysine 277. The helical transmembrane segment at phenylalanine 284–serine 304 threads the bilayer.

This sequence belongs to the metaxin family. As to quaternary structure, part of a high molecular weight complex that is distinct from the TOM complex. Interacts with a variety of mitochondrial precursor proteins. In terms of tissue distribution, expressed in roots, young cotyledons, flowers and leaves.

It is found in the mitochondrion inner membrane. Its subcellular location is the mitochondrion outer membrane. Involved in transport of proteins into the mitochondrion. The polypeptide is Mitochondrial outer membrane import complex protein METAXIN (MTX1) (Arabidopsis thaliana (Mouse-ear cress)).